Here is a 285-residue protein sequence, read N- to C-terminus: Pyrroline-5-carboxylate reductase (285 aa).

Belongs to the pyrroline-5-carboxylate reductase family. As to quaternary structure, homotetramer.

It carries out the reaction L-proline + NADP(+) = (S)-1-pyrroline-5-carboxylate + NADPH + 2 H(+). The enzyme catalyses L-proline + NAD(+) = (S)-1-pyrroline-5-carboxylate + NADH + 2 H(+). Its pathway is amino-acid biosynthesis; L-proline biosynthesis; L-proline from L-glutamate 5-semialdehyde: step 1/1. The polypeptide is Pyrroline-5-carboxylate reductase (Kluyveromyces lactis (strain ATCC 8585 / CBS 2359 / DSM 70799 / NBRC 1267 / NRRL Y-1140 / WM37) (Yeast)).